The following is a 425-amino-acid chain: Formyl-CoA:oxalate CoA-transferase (425 aa).

CoA is bound by residues 17 to 18, arginine 38, 72 to 75, 96 to 98, arginine 104, and 136 to 139; these read QS, LDTK, NFG, and KVYE. The Nucleophile role is filled by aspartate 168. 247-249 provides a ligand contact to substrate; the sequence is GGQ.

This sequence belongs to the CoA-transferase III family. Frc subfamily. In terms of assembly, homodimer.

It catalyses the reaction formyl-CoA + oxalate = oxalyl-CoA + formate. Its pathway is metabolic intermediate degradation; oxalate degradation; CO(2) and formate from oxalate: step 1/2. Functionally, involved in the catabolism of oxalate and in the adapatation to low pH via the induction of the oxalate-dependent acid tolerance response (ATR). Catalyzes the transfer of the CoA moiety from formyl-CoA to oxalate. The polypeptide is Formyl-CoA:oxalate CoA-transferase (Rhodopseudomonas palustris (strain BisA53)).